Reading from the N-terminus, the 192-residue chain is NADH-ubiquinone oxidoreductase subunit 9 (192 aa).

Belongs to the complex I 30 kDa subunit family. As to quaternary structure, complex I is composed of about 30 different subunits.

Its subcellular location is the mitochondrion inner membrane. It catalyses the reaction a ubiquinone + NADH + 5 H(+)(in) = a ubiquinol + NAD(+) + 4 H(+)(out). Core subunit of the mitochondrial membrane respiratory chain NADH dehydrogenase (Complex I) that is believed to belong to the minimal assembly required for catalysis. Complex I functions in the transfer of electrons from NADH to the respiratory chain. The immediate electron acceptor for the enzyme is believed to be ubiquinone. The polypeptide is NADH-ubiquinone oxidoreductase subunit 9 (NAD9) (Prototheca wickerhamii).